Here is a 2005-residue protein sequence, read N- to C-terminus: Sodium channel protein type 2 subunit alpha (2005 aa).

Residues 1–129 (MARSVLVPPG…KLAIKILVHS (129 aa)) are Cytoplasmic-facing. Ser4 is subject to Phosphoserine. Residues 28–61 (RIAEEKAKRPKQERKDEDDENGPKPNSDLEAGKS) form a disordered region. Lys38 participates in a covalent cross-link: Glycyl lysine isopeptide (Lys-Gly) (interchain with G-Cter in SUMO1). The stretch at 111-456 (ILTPFNPIRK…QQMLEQLKKQ (346 aa)) is one I repeat. Residues 130–148 (LFNVLIMCTILTNCVFMTM) traverse the membrane as a helical segment. Topologically, residues 149-155 (SNPPDWT) are extracellular. A helical membrane pass occupies residues 156–176 (KNVEYTFTGIYTFESLIKILA). Topologically, residues 177–190 (RGFCLEDFTFLRNP) are cytoplasmic. Residues 191 to 208 (WNWLDFTVITFAYVTEFV) form a helical membrane-spanning segment. Residues 209–214 (NLGNVS) are Extracellular-facing. Residue Asn212 is glycosylated (N-linked (GlcNAc...) asparagine). The chain crosses the membrane as a helical span at residues 215 to 231 (ALRTFRVLRALKTISVI). Over 232-250 (PGLKTIVGALIQSVKKLSD) the chain is Cytoplasmic. The chain crosses the membrane as a helical span at residues 251–270 (VMILTVFCLSVFALIGLQLF). Residues 271–369 (MGNLRNKCLQ…PNYGYTSFDT (99 aa)) lie on the Extracellular side of the membrane. Cys278 and Cys338 are oxidised to a cystine. 6 N-linked (GlcNAc...) asparagine glycosylation sites follow: Asn285, Asn291, Asn297, Asn303, Asn308, and Asn340. The pore-forming intramembrane region spans 370–394 (FSWAFLSLFRLMTQDFWENLYQLTL). Residues 395 to 401 (RAAGKTY) lie on the Extracellular side of the membrane. The helical transmembrane segment at 402–422 (MIFFVLVIFLGSFYLINLILA) threads the bilayer. Over 423-759 (VVAMAYEEQN…HVVNLVVMDP (337 aa)) the chain is Cytoplasmic. Residues Ser468, Ser471, Ser484, Ser526, Ser528, Ser531, Ser553, Ser554, and Ser558 each carry the phosphoserine modification. The tract at residues 494 to 529 (SSKSEKELKNRRKKKKQKEQAGEEEKEDAVRKSASE) is disordered. Over residues 511-529 (KEQAGEEEKEDAVRKSASE) the composition is skewed to basic and acidic residues. Position 554 is a phosphoserine; by PKC; in vitro (Ser554). A phosphoserine; by PKC; in vitro mark is found at Ser573 and Ser576. Residues Ser589, Ser610, Ser623, Ser687, Ser688, and Ser721 each carry the phosphoserine modification. Residues 591 to 634 (NDFADDEHSTFEDNDSRRDSLFVPHRHGERRPSNVSQASRASRG) form a disordered region. The span at 596–610 (DEHSTFEDNDSRRDS) shows a compositional bias: basic and acidic residues. The stretch at 741–1013 (CCKPWLKVKH…QIAVGRMQKG (273 aa)) is one II repeat. The helical transmembrane segment at 760-778 (FVDLAITICIVLNTLFMAM) threads the bilayer. The Extracellular portion of the chain corresponds to 779 to 789 (EHYPMTEQFSS). A helical membrane pass occupies residues 790 to 809 (VLSVGNLVFTGIFTAEMFLK). The Cytoplasmic portion of the chain corresponds to 810–823 (IIAMDPYYYFQEGW). The chain crosses the membrane as a helical span at residues 824–843 (NIFDGFIVSLSLMELGLANV). Over 844–845 (EG) the chain is Extracellular. A helical membrane pass occupies residues 846-863 (LSVLRSFRLLRVFKLAKS). At 864 to 879 (WPTLNMLIKIIGNSVG) the chain is on the cytoplasmic side. Residues 880-898 (ALGNLTLVLAIIVFIFAVV) form a helical membrane-spanning segment. Topologically, residues 899–927 (GMQLFGKSYKECVCKISNDCELPRWHMHH) are extracellular. Residues Cys912 and Cys918 are joined by a disulfide bond. A binds SCN2B region spans residues 917-918 (DC). Residues 928 to 948 (FFHSFLIVFRVLCGEWIETMW) constitute an intramembrane region (pore-forming). Residues 949–961 (DCMEVAGQTMCLT) are Extracellular-facing. An intrachain disulfide couples Cys950 to Cys959. Residues 962 to 982 (VFMMVMVIGNLVVLNLFLALL) traverse the membrane as a helical segment. Over 983 to 1209 (LSSFSSDNLA…TCYKIVEHNW (227 aa)) the chain is Cytoplasmic. The tract at residues 1120-1166 (EEFSSESDMEESKEKLNATSSSEGSTVDIGAPAEGEQPEAEPEESLE) is disordered. A compositionally biased stretch (acidic residues) spans 1155-1166 (EQPEAEPEESLE). One copy of the III repeat lies at 1190-1504 (KGKLWWNLRK…KKYYNAMKKL (315 aa)). Residues 1210 to 1227 (FETFIVFMILLSSGALAF) traverse the membrane as a helical segment. Over 1228 to 1240 (EDIYIEQRKTIKT) the chain is Extracellular. Residues 1241–1259 (MLEYADKVFTYIFILEMLL) traverse the membrane as a helical segment. The Cytoplasmic segment spans residues 1260–1273 (KWVAYGFQMYFTNA). The chain crosses the membrane as a helical span at residues 1274-1292 (WCWLDFLIVDVSLVSLTAN). Topologically, residues 1293 to 1300 (ALGYSELG) are extracellular. A helical transmembrane segment spans residues 1301 to 1319 (AIKSLRTLRALRPLRALSR). At 1320–1336 (FEGMRVVVNALLGAIPS) the chain is on the cytoplasmic side. The helical transmembrane segment at 1337–1356 (IMNVLLVCLIFWLIFSIMGV) threads the bilayer. Residues 1357-1408 (NLFAGKFYHCINYTTGEMFDVSVVNNYSECQALIESNQTARWKNVKVNFDNV) lie on the Extracellular side of the membrane. A disulfide bridge links Cys1366 with Cys1386. 3 N-linked (GlcNAc...) asparagine glycosylation sites follow: Asn1368, Asn1382, and Asn1393. The segment at residues 1409–1430 (GLGYLSLLQVATFKGWMDIMYA) is an intramembrane region (pore-forming). The Extracellular segment spans residues 1431–1447 (AVDSRNVELQPKYEDNL). A helical transmembrane segment spans residues 1448–1469 (YMYLYFVIFIIFGSFFTLNLFI). Topologically, residues 1470–1532 (GVIIDNFNQQ…MVFDFVTKQV (63 aa)) are cytoplasmic. A Phosphoserine; by PKC modification is found at Ser1506. Residues 1513 to 1811 (IPRPANKFQG…WEKFDPDATQ (299 aa)) form an IV repeat. Residues 1533-1550 (FDISIMILICLNMVTMMV) form a helical membrane-spanning segment. Over 1551–1561 (ETDDQSQEMTN) the chain is Extracellular. The chain crosses the membrane as a helical span at residues 1562 to 1580 (ILYWINLVFIVLFTGECVL). The Cytoplasmic portion of the chain corresponds to 1581 to 1592 (KLISLRHYYFTI). Residues 1593 to 1610 (GWNIFDFVVVILSIVGMF) form a helical membrane-spanning segment. At 1611–1623 (LAELIEKYFVSPT) the chain is on the extracellular side. A helical membrane pass occupies residues 1624–1640 (LFRVIRLARIGRILRLI). At 1641–1659 (KGAKGIRTLLFALMMSLPA) the chain is on the cytoplasmic side. A helical transmembrane segment spans residues 1660-1677 (LFNIGLLLFLVMFIYAIF). At 1678–1699 (GMSNFAYVKREVGIDDMFNFET) the chain is on the extracellular side. Positions 1700-1722 (FGNSMICLFQITTSAGWDGLLAP) form an intramembrane region, pore-forming. Topologically, residues 1723–1752 (ILNSGPPDCDPEKDHPGSSVKGDCGNPSVG) are extracellular. A disulfide bond links Cys1731 and Cys1746. The helical transmembrane segment at 1753-1775 (IFFFVSYIIISFLVVVNMYIAVI) threads the bilayer. Over 1776-2005 (LENFSVATEE…KGKDIRESKK (230 aa)) the chain is Cytoplasmic. In terms of domain architecture, IQ spans 1905-1934 (EEVSAIVIQRAYRRYLLKQKVKKVSSIYKK). Ser1930 carries the post-translational modification Phosphoserine. Residues 1933 to 1964 (KKDKGKEDEGTPIKEDIITDKLNENSTPEKTD) are compositionally biased toward basic and acidic residues. Residues 1933-2005 (KKDKGKEDEG…KGKDIRESKK (73 aa)) are disordered. Thr1943, Thr1963, and Thr1966 each carry phosphothreonine. Ser1971 carries the post-translational modification Phosphoserine. Basic and acidic residues predominate over residues 1979–2005 (TKPEKEKFEKDKSEKEDKGKDIRESKK).

Belongs to the sodium channel (TC 1.A.1.10) family. Nav1.2/SCN2A subfamily. Heterooligomer of a large alpha subunit and a smaller beta subunit. Heterooligomer with SCN2B or SCN4B; disulfide-linked. Heterooligomer with SCN1B or SCN3B; non-covalently linked. Interacts with NEDD4L. Interacts with CALM. Interacts with TMEM233. Interacts with the conotoxin GVIIJ. Interacts with the scorpion toxin BMK M1. May be ubiquitinated by NEDD4L; which would promote its endocytosis. In terms of processing, phosphorylation at Ser-1506 by PKC in a highly conserved cytoplasmic loop slows inactivation of the sodium channel and reduces peak sodium currents. Post-translationally, sumoylated at Lys-38. Sumoylation is induced by hypoxia, increases voltage-gated sodium current and mediates the early response to acute hypoxia in neurons. Sumoylated SCN2A is located at the cell membrane. In terms of tissue distribution, expressed in brain (at protein level). Expressed in cerebellar granule neurons (at protein level).

The protein resides in the cell membrane. The enzyme catalyses Na(+)(in) = Na(+)(out). Functionally, mediates the voltage-dependent sodium ion permeability of excitable membranes. Assuming opened or closed conformations in response to the voltage difference across the membrane, the protein forms a sodium-selective channel through which Na(+) ions may pass in accordance with their electrochemical gradient. Implicated in the regulation of hippocampal replay occurring within sharp wave ripples (SPW-R) important for memory. In Rattus norvegicus (Rat), this protein is Sodium channel protein type 2 subunit alpha.